Reading from the N-terminus, the 244-residue chain is MKFLVILVLLGAAVAFEDDDKIVGGFTCAKNAVPYQVSLNAGYHFCGGSLINSQWVVSAAHCYKSRIQVRLGEHNIALNEGTEQFIDSQKVIKHPNYNSRNLDNDIMLIKLSTTARLSANIQSVPLPSACASAGTNCLISGWGNTLSSGTNYPDLLQCLNAPILTDSQCSNSYPGEITKNMFCAGFLAGGKDSCQGDSGGPVVCNGQLQGVVSWGYGCAQRNYPGVYTKVCNFVTWIQSTISSN.

The N-terminal stretch at 1–15 is a signal peptide; sequence MKFLVILVLLGAAVA. The propeptide at 16–21 is activation peptide; the sequence is FEDDDK. The region spanning 22–242 is the Peptidase S1 domain; sequence IVGGFTCAKN…FVTWIQSTIS (221 aa). 6 cysteine pairs are disulfide-bonded: Cys-28–Cys-158, Cys-46–Cys-62, Cys-130–Cys-231, Cys-137–Cys-204, Cys-169–Cys-183, and Cys-194–Cys-218. His-61 (charge relay system) is an active-site residue. 3 residues coordinate Ca(2+): Glu-73, Asn-75, and Glu-83. Residue Asp-105 is the Charge relay system of the active site. Catalysis depends on Ser-198, which acts as the Charge relay system.

Belongs to the peptidase S1 family. It depends on Ca(2+) as a cofactor.

It localises to the secreted. The protein resides in the extracellular space. The catalysed reaction is Preferential cleavage: Arg-|-Xaa, Lys-|-Xaa.. The polypeptide is Trypsin (Xenopus laevis (African clawed frog)).